Reading from the N-terminus, the 251-residue chain is Hydroxyacylglutathione hydrolase (251 aa).

Zn(2+) contacts are provided by H53, H55, D57, H58, H110, D127, and H165.

This sequence belongs to the metallo-beta-lactamase superfamily. Glyoxalase II family. Monomer. The cofactor is Zn(2+).

It catalyses the reaction an S-(2-hydroxyacyl)glutathione + H2O = a 2-hydroxy carboxylate + glutathione + H(+). It functions in the pathway secondary metabolite metabolism; methylglyoxal degradation; (R)-lactate from methylglyoxal: step 2/2. In terms of biological role, thiolesterase that catalyzes the hydrolysis of S-D-lactoyl-glutathione to form glutathione and D-lactic acid. In Blochmanniella pennsylvanica (strain BPEN), this protein is Hydroxyacylglutathione hydrolase.